The chain runs to 319 residues: Lipoyl synthase (319 aa).

The disordered stretch occupies residues 1-24; sequence MAVVIDTVGARPRHPEKQANPDTP. Residues 13–24 are compositionally biased toward basic and acidic residues; sequence RHPEKQANPDTP. The [4Fe-4S] cluster site is built by C58, C63, C69, C84, C88, C91, and S298. In terms of domain architecture, Radical SAM core spans 70-287; sequence WDKSHATFMI…EEIARAKGFL (218 aa).

This sequence belongs to the radical SAM superfamily. Lipoyl synthase family. The cofactor is [4Fe-4S] cluster.

It localises to the cytoplasm. It carries out the reaction [[Fe-S] cluster scaffold protein carrying a second [4Fe-4S](2+) cluster] + N(6)-octanoyl-L-lysyl-[protein] + 2 oxidized [2Fe-2S]-[ferredoxin] + 2 S-adenosyl-L-methionine + 4 H(+) = [[Fe-S] cluster scaffold protein] + N(6)-[(R)-dihydrolipoyl]-L-lysyl-[protein] + 4 Fe(3+) + 2 hydrogen sulfide + 2 5'-deoxyadenosine + 2 L-methionine + 2 reduced [2Fe-2S]-[ferredoxin]. The protein operates within protein modification; protein lipoylation via endogenous pathway; protein N(6)-(lipoyl)lysine from octanoyl-[acyl-carrier-protein]: step 2/2. Its function is as follows. Catalyzes the radical-mediated insertion of two sulfur atoms into the C-6 and C-8 positions of the octanoyl moiety bound to the lipoyl domains of lipoate-dependent enzymes, thereby converting the octanoylated domains into lipoylated derivatives. This is Lipoyl synthase from Phenylobacterium zucineum (strain HLK1).